Consider the following 711-residue polypeptide: Double-stranded RNA-specific editase 1 (711 aa).

The segment at 1–78 (MDIEDEENMS…KRRKTPGPVL (78 aa)) is disordered. A compositionally biased stretch (basic residues) spans 63–73 (SKYRLKKRRKT). Positions 78–144 (LPKNALMQLN…AEKALRSFVQ (67 aa)) constitute a DRBM 1 domain. 2 interaction with substrate RNA regions span residues 83–88 (LMQLNE) and 104–105 (VH). Serine 149 carries the phosphoserine modification. The segment at 176-220 (LFNGFETPDKSEPPFYVGSNGDDSFSSSGDVSLSASPVPASLTQP) is disordered. Over residues 192–213 (VGSNGDDSFSSSGDVSLSASPV) the composition is skewed to low complexity. One can recognise a DRBM 2 domain in the interval 231–298 (PSGKNPVMIL…AQSALATVFN (68 aa)). 2 interaction with substrate RNA regions span residues 237 to 242 (VMILNE) and histidine 259. The A to I editase domain maps to 370-707 (SVSTGTKCIN…VEKPTEQDQF (338 aa)). Histidine 394 serves as a coordination point for Zn(2+). The active-site Proton donor is glutamate 396. The 1D-myo-inositol hexakisphosphate site is built by arginine 400 and arginine 401. Cysteine 451 and cysteine 526 together coordinate Zn(2+). 6 residues coordinate 1D-myo-inositol hexakisphosphate: lysine 529, arginine 532, lysine 639, lysine 672, lysine 682, and lysine 700.

Homodimer. Homodimerization is essential for its catalytic activity. Can form heterodimers with isoform 5 of ADAR/ADAR1. 1D-myo-inositol hexakisphosphate is required as a cofactor.

Its subcellular location is the nucleus. The protein resides in the nucleolus. It carries out the reaction adenosine in double-stranded RNA + H2O + H(+) = inosine in double-stranded RNA + NH4(+). Its function is as follows. Catalyzes the hydrolytic deamination of adenosine to inosine in double-stranded RNA (dsRNA) referred to as A-to-I RNA editing. This may affect gene expression and function in a number of ways that include mRNA translation by changing codons and hence the amino acid sequence of proteins; pre-mRNA splicing by altering splice site recognition sequences; RNA stability by changing sequences involved in nuclease recognition; genetic stability in the case of RNA virus genomes by changing sequences during viral RNA replication; and RNA structure-dependent activities such as microRNA production or targeting or protein-RNA interactions. Can edit both viral and cellular RNAs and can edit RNAs at multiple sites (hyper-editing) or at specific sites (site-specific editing). Its cellular RNA substrates include: bladder cancer-associated protein (BLCAP), neurotransmitter receptors for glutamate (GRIA2 and GRIK2) and serotonin (HTR2C), GABA receptor (GABRA3) and potassium voltage-gated channel (KCNA1). Site-specific RNA editing of transcripts encoding these proteins results in amino acid substitutions which consequently alter their functional activities. Edits GRIA2 at both the Q/R and R/G sites efficiently but converts the adenosine in hotspot1 much less efficiently. Can inhibit cell proliferation and migration and can stimulate exocytosis. This is Double-stranded RNA-specific editase 1 (Adarb1) from Mus musculus (Mouse).